We begin with the raw amino-acid sequence, 170 residues long: Protein-export protein SecB (170 aa).

Belongs to the SecB family. Homotetramer, a dimer of dimers. One homotetramer interacts with 1 SecA dimer.

It is found in the cytoplasm. Its function is as follows. One of the proteins required for the normal export of preproteins out of the cell cytoplasm. It is a molecular chaperone that binds to a subset of precursor proteins, maintaining them in a translocation-competent state. It also specifically binds to its receptor SecA. The sequence is that of Protein-export protein SecB from Xanthomonas axonopodis pv. citri (strain 306).